Here is a 318-residue protein sequence, read N- to C-terminus: Methionyl-tRNA formyltransferase (318 aa).

117 to 120 (SLLP) is a (6S)-5,6,7,8-tetrahydrofolate binding site.

It belongs to the Fmt family.

It carries out the reaction L-methionyl-tRNA(fMet) + (6R)-10-formyltetrahydrofolate = N-formyl-L-methionyl-tRNA(fMet) + (6S)-5,6,7,8-tetrahydrofolate + H(+). Its function is as follows. Attaches a formyl group to the free amino group of methionyl-tRNA(fMet). The formyl group appears to play a dual role in the initiator identity of N-formylmethionyl-tRNA by promoting its recognition by IF2 and preventing the misappropriation of this tRNA by the elongation apparatus. The chain is Methionyl-tRNA formyltransferase from Malacoplasma penetrans (strain HF-2) (Mycoplasma penetrans).